The following is a 633-amino-acid chain: Laccase ARB_05828 (633 aa).

The N-terminal stretch at 1–16 (MKRLGLAALYIGSALA) is a signal peptide. A propeptide spanning residues 22 to 47 (GPPSRNVPRDDFPMFNPLPSTDLNTR) is cleaved from the precursor. Asn143 is a glycosylation site (N-linked (GlcNAc...) asparagine). Positions 148, 150, 192, and 194 each coordinate Cu cation. Cysteines 169 and 607 form a disulfide. The Plastocyanin-like domain occupies 224-353 (LLMTDHLHSS…GRYWVRTTPA (130 aa)). N-linked (GlcNAc...) asparagine glycans are attached at residues Asn286 and Asn456. The Cu cation site is built by His508, His511, His513, His568, Cys569, His570, and His574.

The protein belongs to the multicopper oxidase family. Monomer. Requires Cu cation as cofactor.

It localises to the secreted. The catalysed reaction is 4 hydroquinone + O2 = 4 benzosemiquinone + 2 H2O. The protein is Laccase ARB_05828 of Arthroderma benhamiae (strain ATCC MYA-4681 / CBS 112371) (Trichophyton mentagrophytes).